A 58-amino-acid polypeptide reads, in one-letter code: Large ribosomal subunit protein uL30 (58 aa).

Belongs to the universal ribosomal protein uL30 family. In terms of assembly, part of the 50S ribosomal subunit.

The chain is Large ribosomal subunit protein uL30 from Pseudomonas savastanoi pv. phaseolicola (strain 1448A / Race 6) (Pseudomonas syringae pv. phaseolicola (strain 1448A / Race 6)).